Reading from the N-terminus, the 495-residue chain is MRAHEYALDDDIVAIATALSPAALGIVRTSGSSSIERVASFFSRAQALTRARAHTFLHGWILDGKTRVDEVVLLVYRAPHSFTGEHAVEIICHGGVRTVQAVYRLCLAQGFRAAQRGEFSFRSFFHGKRDLTRIEAIQSLVDARTCAAQQQAVLHLSGALQQEIAALTRALLAFSATLQGEIEYPEDEETRVHDIDMRELEPLVERLRRLRACWQERALQRTGVRIVLGGCPNAGKSSLFNALLGQDRAIVSSVPGTTRDWLEADLDLSGIPVRLCDTAGLRVTDNPIEAQGVVRSEQLLQGADCVFYIINGRAGVQAADCAFLSDCAVPLVVVVTHNDLMSMSERIQVCQAVQPFISAPVLSCARSQDARGAGEQCLAGGKNGEVRDRAPRAFVCVSAKTHAGLDALRAQTLHLLHGGQVPYEELSLGSERQYVLVDAAVQALEHAQEAYARGFGLDAVVHDLEEALYHCGALTGEVHSEDILDALFEKLCVGK.

3 residues coordinate (6S)-5-formyl-5,6,7,8-tetrahydrofolate: Arg28, Glu89, and Lys128. Residues 223–417 (GVRIVLGGCP…LRAQTLHLLH (195 aa)) form the TrmE-type G domain. Asn233 lines the K(+) pocket. GTP is bound by residues 233–238 (NAGKSS), 252–258 (SSVPGTT), and 277–280 (DTAG). Ser237 contributes to the Mg(2+) binding site. Residues Ser252, Val254, and Thr257 each coordinate K(+). A Mg(2+)-binding site is contributed by Thr258. (6S)-5-formyl-5,6,7,8-tetrahydrofolate is bound at residue Lys495.

This sequence belongs to the TRAFAC class TrmE-Era-EngA-EngB-Septin-like GTPase superfamily. TrmE GTPase family. As to quaternary structure, homodimer. Heterotetramer of two MnmE and two MnmG subunits. Requires K(+) as cofactor.

The protein resides in the cytoplasm. Exhibits a very high intrinsic GTPase hydrolysis rate. Involved in the addition of a carboxymethylaminomethyl (cmnm) group at the wobble position (U34) of certain tRNAs, forming tRNA-cmnm(5)s(2)U34. The chain is tRNA modification GTPase MnmE from Treponema pallidum (strain Nichols).